Here is a 452-residue protein sequence, read N- to C-terminus: Bifunctional protein GlmU (452 aa).

The interval 1–218 (MKVLILAAGL…IVEVSGVNDR (218 aa)) is pyrophosphorylase. UDP-N-acetyl-alpha-D-glucosamine-binding positions include 6 to 9 (LAAG), K20, Q68, 73 to 74 (GT), 95 to 97 (YGD), G134, E147, N162, and N216. D97 contributes to the Mg(2+) binding site. N216 is a binding site for Mg(2+). A linker region spans residues 219–239 (IQLAQLETIAKQRILEKLMLS). An N-acetyltransferase region spans residues 240–452 (GVTIVDPNST…EELKNADHKE (213 aa)). Positions 321 and 339 each coordinate UDP-N-acetyl-alpha-D-glucosamine. H351 functions as the Proton acceptor in the catalytic mechanism. UDP-N-acetyl-alpha-D-glucosamine contacts are provided by Y354 and N365. Acetyl-CoA contacts are provided by residues A368, 374–375 (NY), S393, A411, and R428.

It in the N-terminal section; belongs to the N-acetylglucosamine-1-phosphate uridyltransferase family. In the C-terminal section; belongs to the transferase hexapeptide repeat family. As to quaternary structure, homotrimer. Mg(2+) is required as a cofactor.

It localises to the cytoplasm. It carries out the reaction alpha-D-glucosamine 1-phosphate + acetyl-CoA = N-acetyl-alpha-D-glucosamine 1-phosphate + CoA + H(+). The catalysed reaction is N-acetyl-alpha-D-glucosamine 1-phosphate + UTP + H(+) = UDP-N-acetyl-alpha-D-glucosamine + diphosphate. It participates in nucleotide-sugar biosynthesis; UDP-N-acetyl-alpha-D-glucosamine biosynthesis; N-acetyl-alpha-D-glucosamine 1-phosphate from alpha-D-glucosamine 6-phosphate (route II): step 2/2. It functions in the pathway nucleotide-sugar biosynthesis; UDP-N-acetyl-alpha-D-glucosamine biosynthesis; UDP-N-acetyl-alpha-D-glucosamine from N-acetyl-alpha-D-glucosamine 1-phosphate: step 1/1. The protein operates within bacterial outer membrane biogenesis; LPS lipid A biosynthesis. Functionally, catalyzes the last two sequential reactions in the de novo biosynthetic pathway for UDP-N-acetylglucosamine (UDP-GlcNAc). The C-terminal domain catalyzes the transfer of acetyl group from acetyl coenzyme A to glucosamine-1-phosphate (GlcN-1-P) to produce N-acetylglucosamine-1-phosphate (GlcNAc-1-P), which is converted into UDP-GlcNAc by the transfer of uridine 5-monophosphate (from uridine 5-triphosphate), a reaction catalyzed by the N-terminal domain. The sequence is that of Bifunctional protein GlmU from Fervidobacterium nodosum (strain ATCC 35602 / DSM 5306 / Rt17-B1).